The following is a 750-amino-acid chain: Cullin-5 (750 aa).

The Cullin neddylation domain maps to R678–D739. Residue K691 forms a Glycyl lysine isopeptide (Lys-Gly) (interchain with G-Cter in NEDD8) linkage.

It belongs to the cullin family. Post-translationally, neddylated; which enhances the ubiquitination activity of SCF-like complex.

It participates in protein modification; protein ubiquitination. In terms of biological role, probable core component of cullin-based SCF-like E3 ubiquitin-protein ligase complexes which mediate the ubiquitination and subsequent proteasomal degradation of target proteins. The E3 ubiquitin-protein ligase activity of the complex is dependent on the neddylation of the cullin subunit. This Dictyostelium discoideum (Social amoeba) protein is Cullin-5 (culE).